Here is a 408-residue protein sequence, read N- to C-terminus: DNA replication and repair protein RecF (408 aa).

ATP is bound at residue 30-37 (GSNGQGKT). Disordered stretches follow at residues 220 to 252 (DHGP…DGGR) and 389 to 408 (SPTP…GGAA). Positions 389 to 402 (SPTPASASEPASPG) are enriched in low complexity.

It belongs to the RecF family.

It is found in the cytoplasm. In terms of biological role, the RecF protein is involved in DNA metabolism; it is required for DNA replication and normal SOS inducibility. RecF binds preferentially to single-stranded, linear DNA. It also seems to bind ATP. This chain is DNA replication and repair protein RecF, found in Clavibacter sepedonicus (Clavibacter michiganensis subsp. sepedonicus).